Here is a 554-residue protein sequence, read N- to C-terminus: Phosphomannomutase (554 aa).

Serine 149 (phosphoserine intermediate) is an active-site residue. Mg(2+) contacts are provided by serine 149, aspartate 301, aspartate 303, and aspartate 305.

This sequence belongs to the phosphohexose mutase family. The cofactor is Mg(2+).

The catalysed reaction is alpha-D-mannose 1-phosphate = D-mannose 6-phosphate. This Mycoplasma pneumoniae (strain ATCC 29342 / M129 / Subtype 1) (Mycoplasmoides pneumoniae) protein is Phosphomannomutase (manB).